The chain runs to 359 residues: Mannonate dehydratase (359 aa).

Belongs to the mannonate dehydratase family. It depends on Fe(2+) as a cofactor. Mn(2+) is required as a cofactor.

It carries out the reaction D-mannonate = 2-dehydro-3-deoxy-D-gluconate + H2O. It participates in carbohydrate metabolism; pentose and glucuronate interconversion. Functionally, catalyzes the dehydration of D-mannonate. The sequence is that of Mannonate dehydratase (uxuA) from Bacillus subtilis (strain 168).